The chain runs to 210 residues: Na(+)-translocating NADH-quinone reductase subunit D (210 aa).

6 helical membrane passes run 10–30 (ILFA…GVCS), 42–62 (FVMT…VSLI), 72–92 (IIVQ…VLKA), 103–123 (VFVG…AYAM), 131–151 (FIDG…VAFF), and 178–198 (NGLM…IWAI).

It belongs to the NqrDE/RnfAE family. Composed of six subunits; NqrA, NqrB, NqrC, NqrD, NqrE and NqrF.

The protein localises to the cell inner membrane. It carries out the reaction a ubiquinone + n Na(+)(in) + NADH + H(+) = a ubiquinol + n Na(+)(out) + NAD(+). NQR complex catalyzes the reduction of ubiquinone-1 to ubiquinol by two successive reactions, coupled with the transport of Na(+) ions from the cytoplasm to the periplasm. NqrA to NqrE are probably involved in the second step, the conversion of ubisemiquinone to ubiquinol. This Photobacterium profundum (strain SS9) protein is Na(+)-translocating NADH-quinone reductase subunit D.